Here is an 842-residue protein sequence, read N- to C-terminus: Synaptonemal complex protein 2-like (842 aa).

Disordered regions lie at residues 451-473, 505-560, 619-666, and 715-738; these read GSLE…EPEQ, FARD…KQRV, STQK…SSLE, and EDAP…PGSV. Composition is skewed to basic and acidic residues over residues 458–470 and 505–525; these read TEER…KQDE and FARD…HDLL. Basic residues predominate over residues 543–559; sequence NHKRKSLRTYSQRKKQR. Basic and acidic residues-rich tracts occupy residues 624 to 633 and 643 to 655; these read GLEKPERRGS and RVTD…EPRS.

This sequence belongs to the SYCP2 family. As to expression, specifically expressed in oocytes.

It is found in the nucleus. Its subcellular location is the chromosome. The protein localises to the centromere. Functionally, oocyte-specific protein that localizes to centromeres at the dictyate stage and regulates the survival of primordial oocytes. The sequence is that of Synaptonemal complex protein 2-like from Mus musculus (Mouse).